The primary structure comprises 390 residues: Probable NADH-dependent butanol dehydrogenase 2 (390 aa).

Belongs to the iron-containing alcohol dehydrogenase family.

It participates in alcohol metabolism; butanol biosynthesis. This chain is Probable NADH-dependent butanol dehydrogenase 2 (yugK), found in Bacillus subtilis (strain 168).